A 99-amino-acid polypeptide reads, in one-letter code: DNA-directed RNA polymerase subunit Rpo11 (99 aa).

Belongs to the archaeal Rpo11/eukaryotic RPB11/RPC19 RNA polymerase subunit family. In terms of assembly, part of the RNA polymerase complex.

It localises to the cytoplasm. It catalyses the reaction RNA(n) + a ribonucleoside 5'-triphosphate = RNA(n+1) + diphosphate. In terms of biological role, DNA-dependent RNA polymerase (RNAP) catalyzes the transcription of DNA into RNA using the four ribonucleoside triphosphates as substrates. This chain is DNA-directed RNA polymerase subunit Rpo11, found in Aeropyrum pernix (strain ATCC 700893 / DSM 11879 / JCM 9820 / NBRC 100138 / K1).